A 430-amino-acid chain; its full sequence is Keratin, type I cytoskeletal 18 (430 aa).

Position 2 is an N-acetylserine (Ser2). The tract at residues Ser2 to Asn79 is head. 4 positions are modified to phosphoserine: Ser7, Ser10, Ser15, and Ser18. Phosphoserine; alternate is present on residues Ser30 and Ser31. Residues Ser30 and Ser31 are each glycosylated (O-linked (GlcNAc) serine; alternate). Ser34 is subject to Phosphoserine; by CDK1. Tyr36 is modified (phosphotyrosine). A Phosphoserine modification is found at Ser42. Arg45 carries the omega-N-methylarginine modification. Ser49 is modified (phosphoserine; alternate). Ser49 is a glycosylation site (O-linked (GlcNAc) serine; alternate). Ser51 carries the post-translational modification Phosphoserine; by MAPKAPK2 and MAPKAPK3. Thr52 carries the post-translational modification Phosphothreonine. Phosphoserine; by CAMK, PKC/PRKCE and AURKA is present on Ser53. Position 55 is an omega-N-methylarginine (Arg55). A Phosphoserine modification is found at Ser60. Thr65 carries the post-translational modification Phosphothreonine. The interval Gly70–Leu373 is necessary for interaction with PNN. The tract at residues Ile77–His128 is interaction with TRADD. The tract at residues Glu80–His115 is coil 1A. In terms of domain architecture, IF rod spans Glu80–Asn391. A Glycyl lysine isopeptide (Lys-Gly) (interchain with G-Cter in SUMO2) cross-link involves residue Lys81. A phosphoserine mark is found at Ser93 and Ser100. Residues Leu116 to Ile132 are linker 1. Lys131 is modified (N6-acetyllysine). The segment at Ile133–Leu224 is coil 1B. A Phosphoserine modification is found at Ser177. The segment at Gln225 to Ile248 is linker 12. An interaction with DNAJB6 region spans residues Gln243 to Asn391. A Glycyl lysine isopeptide (Lys-Gly) (interchain with G-Cter in SUMO2) cross-link involves residue Lys247. The coil 2 stretch occupies residues Met249–Gly387. Thr302 is subject to Phosphothreonine. Phosphoserine is present on residues Ser305, Ser319, and Ser323. Residues Lys370 and Lys372 each participate in a glycyl lysine isopeptide (Lys-Gly) (interchain with G-Cter in SUMO2) cross-link. The tail stretch occupies residues Glu388–His430. A phosphoserine mark is found at Ser398, Ser399, and Ser401. Thr404 carries the post-translational modification Phosphothreonine. A Glycyl lysine isopeptide (Lys-Gly) (interchain with G-Cter in SUMO2) cross-link involves residue Lys417. At Lys426 the chain carries N6-acetyllysine; alternate. Residue Lys426 forms a Glycyl lysine isopeptide (Lys-Gly) (interchain with G-Cter in SUMO1); alternate linkage. Lys426 participates in a covalent cross-link: Glycyl lysine isopeptide (Lys-Gly) (interchain with G-Cter in SUMO2); alternate.

The protein belongs to the intermediate filament family. Heterotetramer of two type I and two type II keratins. KRT18 associates with KRT8. Interacts with PLEC isoform 1C, when in a heterodimer with KRT8. Interacts with the thrombin-antithrombin complex. Interacts with PNN and mutated CFTR. Interacts with YWHAE, YWHAH and YWHAZ only when phosphorylated. Interacts with DNAJB6, TCHP and TRADD. Interacts with FAM83H. Interacts with EPPK1. Interacts with PKP1 and PKP2. In terms of assembly, (Microbial infection) Interacts with hepatitis C virus/HCV core protein. Post-translationally, phosphorylation at Ser-34 increases during mitosis. Hyperphosphorylated at Ser-53 in diseased cirrhosis liver. Phosphorylation increases by IL-6. In terms of processing, proteolytically cleaved by caspases during epithelial cell apoptosis. Cleavage occurs at Asp-238 by either caspase-3, caspase-6 or caspase-7. O-GlcNAcylation increases solubility, and decreases stability by inducing proteasomal degradation. Expressed in colon, placenta, liver and very weakly in exocervix. Increased expression observed in lymph nodes of breast carcinoma.

Its subcellular location is the nucleus matrix. It localises to the cytoplasm. The protein resides in the perinuclear region. The protein localises to the nucleus. It is found in the nucleolus. Its function is as follows. Involved in the uptake of thrombin-antithrombin complexes by hepatic cells. When phosphorylated, plays a role in filament reorganization. Involved in the delivery of mutated CFTR to the plasma membrane. Together with KRT8, is involved in interleukin-6 (IL-6)-mediated barrier protection. The sequence is that of Keratin, type I cytoskeletal 18 (KRT18) from Homo sapiens (Human).